We begin with the raw amino-acid sequence, 190 residues long: Putative cyclic ADP-D-ribose synthase ThsB (190 aa).

It belongs to the Thoeris B TIR-like family. In terms of assembly, homodimer.

The protein resides in the cytoplasm. Its activity is regulated as follows. Activated upon phage infection. TIR-like domain-containing component of the Thoeris antiviral defense system, composed of ThsA and ThsB. Expression of ThsA and ThsB in B.subtilis (strain BEST7003) confers resistance to phages SBSphiC, SBSphiJ and SPO1. Phage infection activates this protein, generating a signal molecule that in turn activates ThsA. Its function is as follows. Probably hydrolyzes NAD(+) to make a cyclic ADP-D-ribose (cADPR) signaling molecule; might make 3'cADPR. This chain is Putative cyclic ADP-D-ribose synthase ThsB, found in Bacillus amyloliquefaciens (strain Y2) (Bacillus amyloliquefaciens subsp. plantarum (strain B9601-Y2)).